The chain runs to 853 residues: uncharacterized protein (853 aa).

2 coiled-coil regions span residues 313 to 343 (RTDE…LKVA) and 480 to 528 (EGQV…SELI).

This is an uncharacterized protein from Ostreid herpesvirus 1 (isolate France) (OsHV-1).